The primary structure comprises 271 residues: tRNA pseudouridine synthase A (271 aa).

Asp-54 functions as the Nucleophile in the catalytic mechanism. Tyr-112 lines the substrate pocket.

The protein belongs to the tRNA pseudouridine synthase TruA family. In terms of assembly, homodimer.

The enzyme catalyses uridine(38/39/40) in tRNA = pseudouridine(38/39/40) in tRNA. Formation of pseudouridine at positions 38, 39 and 40 in the anticodon stem and loop of transfer RNAs. The polypeptide is tRNA pseudouridine synthase A (Acinetobacter baylyi (strain ATCC 33305 / BD413 / ADP1)).